The following is a 418-amino-acid chain: uncharacterized protein (418 aa).

10 consecutive transmembrane segments (helical) span residues 51-71 (FVMAVGGIAAIVAQTPIGALV), 79-99 (ALVVAGAVLVTAAAVAMPLFA), 110-130 (VTGIASSVFAPALAAITLGAV), 163-183 (FFGPVVVFWVLAGMALISVLA), 224-244 (VIFGAAVVAFHFANAAMLPLV), 258-278 (ALMSSCIVAAQVVMVPVAYVV), 289-309 (PIFLVGFAVLTARGFLYTLSD), 315-335 (VGVQLLDGIGAGIFGALFPLV), 356-376 (ATGIGAALSNLVAGWIVVVAG), and 379-399 (AAFMSLGALAGAGFLLYLVAM).

This sequence belongs to the major facilitator superfamily.

It localises to the cell membrane. This is an uncharacterized protein from Mycobacterium tuberculosis (strain CDC 1551 / Oshkosh).